Consider the following 323-residue polypeptide: Mortality factor 4-like protein 1 (323 aa).

One can recognise a Tudor-knot domain in the interval glutamine 12 to valine 62. Positions glutamine 77 to threonine 143 are disordered. A sufficient for interaction with SIN3A region spans residues proline 94–valine 227. N6-acetyllysine is present on lysine 104. The interval serine 125–aspartate 191 is interaction with RB1-1. Positions threonine 149–alanine 303 are sufficient for interaction with PHF12. Residues asparagine 152–valine 323 enclose the MRG domain. The segment at leucine 284–leucine 305 is interaction with RB1-2.

Component of the NuA4 histone acetyltransferase complex which contains the catalytic subunit KAT5/TIP60 and the subunits EP400, TRRAP/PAF400, BRD8/SMAP, EPC1, DMAP1/DNMAP1, RUVBL1/TIP49, RUVBL2, ING3, actin, ACTL6A/BAF53A, MORF4L1/MRG15, MORF4L2/MRGX, MRGBP, YEATS4/GAS41, VPS72/YL1 and MEAF6. The NuA4 complex interacts with MYC and the adenovirus E1A protein. MORF4L1 may also participate in the formation of NuA4 related complexes which lack the KAT5/TIP60 catalytic subunit, but which include the SWI/SNF related protein SRCAP. Component of the mSin3A histone deacetylase complex, which includes SIN3A, HDAC2, ARID4B, MORF4L1, RBBP4/RbAp48, and RBBP7/RbAp46. May also interact with PHF12 and one or more as yet undefined members of the TLE (transducin-like enhancer of split) family of transcriptional repressors. Component of the SIN3B complex, which includes SIN3B, HDAC2 or HDAC1, PHF12 and MORF4L1. Interacts with RB1 and KAT8. Interacts with the N-terminus of MRFAP1. Found in a complex composed of MORF4L1, MRFAP1 and RB1. Interacts with the entire BRCA complex, which contains BRCA1, PALB2, BRCA2 and RAD51. Interacts with PALB2. Forms a complex with MSL1 and NUPR1.

It localises to the nucleus. Functionally, component of the NuA4 histone acetyltransferase (HAT) complex which is involved in transcriptional activation of select genes principally by acetylation of nucleosomal histones H4 and H2A. This modification may both alter nucleosome - DNA interactions and promote interaction of the modified histones with other proteins which positively regulate transcription. This complex may be required for the activation of transcriptional programs associated with oncogene and proto-oncogene mediated growth induction, tumor suppressor mediated growth arrest and replicative senescence, apoptosis, and DNA repair. The NuA4 complex ATPase and helicase activities seem to be, at least in part, contributed by the association of RUVBL1 and RUVBL2 with EP400. NuA4 may also play a direct role in DNA repair when directly recruited to sites of DNA damage. As part of the SIN3B complex represses transcription and counteracts the histone acetyltransferase activity of EP300 through the recognition H3K27ac marks by PHF12 and the activity of the histone deacetylase HDAC2. SIN3B complex is recruited downstream of the constitutively active genes transcriptional start sites through interaction with histones and mitigates histone acetylation and RNA polymerase II progression within transcribed regions contributing to the regulation of transcription. Required for homologous recombination repair (HRR) and resistance to mitomycin C (MMC). Involved in the localization of PALB2, BRCA2 and RAD51, but not BRCA1, to DNA-damage foci. This is Mortality factor 4-like protein 1 (Morf4l1) from Rattus norvegicus (Rat).